The following is a 317-amino-acid chain: UDP-3-O-acylglucosamine N-acyltransferase (317 aa).

The active-site Proton acceptor is histidine 229.

It belongs to the transferase hexapeptide repeat family. LpxD subfamily. Homotrimer.

It catalyses the reaction a UDP-3-O-[(3R)-3-hydroxyacyl]-alpha-D-glucosamine + a (3R)-hydroxyacyl-[ACP] = a UDP-2-N,3-O-bis[(3R)-3-hydroxyacyl]-alpha-D-glucosamine + holo-[ACP] + H(+). It participates in bacterial outer membrane biogenesis; LPS lipid A biosynthesis. In terms of biological role, catalyzes the N-acylation of UDP-3-O-acylglucosamine using 3-hydroxyacyl-ACP as the acyl donor. Is involved in the biosynthesis of lipid A, a phosphorylated glycolipid that anchors the lipopolysaccharide to the outer membrane of the cell. This Campylobacter concisus (strain 13826) protein is UDP-3-O-acylglucosamine N-acyltransferase.